A 411-amino-acid chain; its full sequence is Argininosuccinate lyase (411 aa).

It belongs to the lyase 1 family. Argininosuccinate lyase subfamily.

It localises to the cytoplasm. It catalyses the reaction 2-(N(omega)-L-arginino)succinate = fumarate + L-arginine. It participates in amino-acid biosynthesis; L-arginine biosynthesis; L-arginine from L-ornithine and carbamoyl phosphate: step 3/3. The chain is Argininosuccinate lyase from Legionella pneumophila (strain Lens).